The sequence spans 444 residues: Sprouty-related, EVH1 domain-containing protein 1 (444 aa).

At S2 the chain carries N-acetylserine. The region spanning A6–I123 is the WH1 domain. K225 is subject to N6-methyllysine. The KBD domain maps to S234–Q286. S239 bears the Phosphoserine mark. Residues W268–D287 form a disordered region. The residue at position 309 (S309) is a Phosphoserine. A required for interaction with TESK1 region spans residues S333–G444. The region spanning R334–A442 is the SPR domain.

In terms of assembly, homodimer and heterodimer. Able to interact with SPRED2 to form heterodimers. Interacts (via C-terminus) with TAOK1/MARKK (via C-terminus); the interaction does not affect TAOK1 kinase activity. Interacts (via C-terminus) with TESK1 (via C-terminus); the interaction inhibits TESK1 kinase activity. Interacts with CAV1. Interacts with RAS. Interacts with palmitoyltransferase ZDHHC17/HIP14; the interaction leads to palmitoylation of SPRED1. In terms of processing, palmitoylated by ZDHHC17/HIP14. Post-translationally, ubiquitinated. Phosphorylated on tyrosine. As to expression, expressed in brain. Weakly expressed in lung, heart, liver, kidney, intestine, spleen, testis, thymus, colon and ovary. Also expressed in embryonic tissues such as heart, lung, liver and brain. Highly expressed in IL3-dependent hematopoietic cell lines (Ba/F3 and MC/9) and bone marrow-derived mast cells (BMMC).

Its subcellular location is the cell membrane. The protein localises to the membrane. The protein resides in the caveola. It localises to the nucleus. In terms of biological role, tyrosine kinase substrate that inhibits growth-factor-mediated activation of MAP kinase. Negatively regulates hematopoiesis of bone marrow. Inhibits fibroblast growth factor (FGF)-induced retinal lens fiber differentiation, probably by inhibiting FGF-mediated phosphorylation of ERK1/2. Attenuates actin stress fiber formation via inhibition of TESK1-mediated phosphorylation of cofilin. Inhibits TGFB-induced epithelial-to-mesenchymal transition in lens epithelial cells. This chain is Sprouty-related, EVH1 domain-containing protein 1 (Spred1), found in Mus musculus (Mouse).